Consider the following 517-residue polypeptide: Ribose import ATP-binding protein RbsA (517 aa).

ABC transporter domains are found at residues Leu-11 to Asp-251 and Tyr-263 to Thr-507. Gly-43–Ser-50 contacts ATP.

This sequence belongs to the ABC transporter superfamily. Ribose importer (TC 3.A.1.2.1) family. In terms of assembly, the complex is composed of an ATP-binding protein (RbsA), two transmembrane proteins (RbsC) and a solute-binding protein (RbsB).

Its subcellular location is the cell inner membrane. It carries out the reaction D-ribose(out) + ATP + H2O = D-ribose(in) + ADP + phosphate + H(+). In terms of biological role, part of the ABC transporter complex RbsABC involved in ribose import. Responsible for energy coupling to the transport system. The chain is Ribose import ATP-binding protein RbsA from Burkholderia pseudomallei (strain K96243).